The primary structure comprises 102 residues: Small ribosomal subunit protein uS10 (102 aa).

The protein belongs to the universal ribosomal protein uS10 family. As to quaternary structure, part of the 30S ribosomal subunit.

Its function is as follows. Involved in the binding of tRNA to the ribosomes. This Geotalea daltonii (strain DSM 22248 / JCM 15807 / FRC-32) (Geobacter daltonii) protein is Small ribosomal subunit protein uS10.